Reading from the N-terminus, the 306-residue chain is D-aminoacyl-tRNA deacylase (306 aa).

The protein belongs to the DtdA deacylase family. As to quaternary structure, monomer. Requires Zn(2+) as cofactor.

It catalyses the reaction a D-aminoacyl-tRNA + H2O = a tRNA + a D-alpha-amino acid + H(+). It carries out the reaction glycyl-tRNA(Ala) + H2O = tRNA(Ala) + glycine + H(+). D-aminoacyl-tRNA deacylase with broad substrate specificity. By recycling D-aminoacyl-tRNA to D-amino acids and free tRNA molecules, this enzyme counteracts the toxicity associated with the formation of D-aminoacyl-tRNA entities in vivo. This chain is D-aminoacyl-tRNA deacylase, found in Methanosarcina barkeri (strain Fusaro / DSM 804).